Consider the following 579-residue polypeptide: Mitogen-activated protein kinase kinase kinase 7 (579 aa).

The interval 1 to 300 (MSTASAASSS…FPGADEPLQY (300 aa)) is interaction with MAPK8IP1. Residues 36-291 (IEVEEVVGRG…KIMTHLMRYF (256 aa)) form the Protein kinase domain. ATP is bound by residues 42 to 50 (VGRGAFGVV) and Lys63. Residue Lys72 forms a Glycyl lysine isopeptide (Lys-Gly) (interchain with G-Cter in ubiquitin) linkage. The active-site Proton acceptor is the Asp156. Lys158 participates in a covalent cross-link: Glycyl lysine isopeptide (Lys-Gly) (interchain with G-Cter in ubiquitin). Phosphothreonine; by autocatalysis occurs at positions 184 and 187. Residue Ser192 is modified to Phosphoserine; by autocatalysis. A Glycyl lysine isopeptide (Lys-Gly) (interchain with G-Cter in ubiquitin) cross-link involves residue Lys209. Disordered regions lie at residues 301 to 339 (PCQYSDEGQSNSATSTGSFMDITSTNTSNKSDTNMEQVP) and 354 to 391 (KNQAKQQSESGRLSLGASRGSSVESLPPTSEGKRMSAD). The segment covering 306 to 322 (DEGQSNSATSTGSFMDI) has biased composition (polar residues). Composition is skewed to low complexity over residues 323-334 (TSTNTSNKSDTN) and 361-375 (SESGRLSLGASRGSS). Phosphoserine is present on residues Ser367, Ser389, and Ser412. The segment covering 416–425 (LTVTGTDPGQ) has biased composition (polar residues). A disordered region spans residues 416–466 (LTVTGTDPGQVSSRSSSPSVRMITTSGPTSEKPARSHPWTPDDSTDTNGSD). Low complexity predominate over residues 426 to 436 (VSSRSSSPSVR). At Ser428 the chain carries Phosphoserine.

It belongs to the protein kinase superfamily. STE Ser/Thr protein kinase family. MAP kinase kinase kinase subfamily. In terms of assembly, can form homodimer. Binds both upstream activators and downstream substrates in multimolecular complexes. Interacts with TAB1/MAP3K7IP1, TAB2/MAP3K7IP2 and TAB3/MAP3K7IP3. Identified in the TRIKA2 complex composed of MAP3K7/TAK1, TAB1/MAP3K7IP1 and TAB2/MAP3K7IP2. Interacts with PPM1L and PPM1B/PP2CB. Interaction with PP2A and PPP6C leads to its repressed activity. Interacts with TRAF6 and TAB1/MAP3K7IP1; during IL-1 signaling. Interacts with TAOK1 and TAOK2; interaction with TAOK2 interferes with MAP3K7 interaction with IKKA, thus preventing NF-kappa-B activation. Interacts with DYNC2I2 (via WD domains). Interacts with CYLD and RBCK1. Interacts with TGFBR1; induces MAP3K7/TAK1 activation by TRAF6. Interacts with MAPK8IP1 and SMAD6. Interacts with isoform 1 of VRK2. Interacts with DAB2; the interaction is induced by TGF-beta stimulation and may mediate TGF-beta stimulated JNK activation. Interacts with TRIM5. Part of a complex containing ITCH, NDFIP1 and MAP3K7. Interacts with IFIT5; the interaction synergizes the recruitment of IKK to MAP3K7 and enhances IKK phosphorylation. Interacts with PLEKHM1 (via N- and C-terminus). Found in a complex with SH3RF1, RAC2, MAP2K7/MKK7, MAPK8IP1/JIP1, MAPK8/JNK1 and MAPK9/JNK2. Interacts with SASH1. Interacts with RIPK1. Mg(2+) serves as cofactor. Post-translationally, association with TAB1/MAP3K7IP1 promotes autophosphorylation at Ser-192 and subsequent activation. Association with TAB2/MAP3K7IP2, itself associated with free unanchored Lys-63 polyubiquitin chain, promotes autophosphorylation and subsequent activation of MAP3K7. Dephosphorylation at Ser-192 by PPM1B/PP2CB and at Thr-187 by PP2A and PPP6C leads to inactivation. In terms of processing, 'Lys-48'-linked polyubiquitination at Lys-72 is induced by TNFalpha, and leads to proteasomal degradation. Undergoes 'Lys-48'-linked polyubiquitination catalyzed by ITCH. 'Lys-63'-linked polyubiquitination at Lys-158 by TRIM8 does not lead to proteasomal degradation but contributes to autophosphorylation and activation. Deubiquitinated by CYLD, a protease that selectively cleaves 'Lys-63'-linked ubiquitin chains. Deubiquitinated by USP19; leading to negative regulation of TNF-alpha- and IL-1beta-triggered NF-kappa-B activation.

The protein resides in the cytoplasm. It is found in the cell membrane. The catalysed reaction is L-seryl-[protein] + ATP = O-phospho-L-seryl-[protein] + ADP + H(+). It catalyses the reaction L-threonyl-[protein] + ATP = O-phospho-L-threonyl-[protein] + ADP + H(+). Activated by pro-inflammatory cytokines and in response to physical and chemical stresses, including osmotic stress, oxidative stress, arsenic and ultraviolet light irradiation. Activated by 'Lys-63'-linked polyubiquitination and by autophosphorylation. Association with TAB1/MAP3K7IP1 and TAB2/MAP3K7IP2 promotes activation through autophosphorylation, whereas PPM1B/PP2CB, PP2A and PPP6C dephosphorylation leads to inactivation. Ceramides are also able to activate MAP3K7/TAK1. Serine/threonine kinase which acts as an essential component of the MAP kinase signal transduction pathway. Plays an important role in the cascades of cellular responses evoked by changes in the environment. Mediates signal transduction of TRAF6, various cytokines including interleukin-1 (IL-1), transforming growth factor-beta (TGFB), TGFB-related factors like BMP2 and BMP4, toll-like receptors (TLR), tumor necrosis factor receptor CD40 and B-cell receptor (BCR). Once activated, acts as an upstream activator of the MKK/JNK signal transduction cascade and the p38 MAPK signal transduction cascade through the phosphorylation and activation of several MAP kinase kinases like MAP2K1/MEK1, MAP2K3/MKK3, MAP2K6/MKK6 and MAP2K7/MKK7. These MAP2Ks in turn activate p38 MAPKs and c-jun N-terminal kinases (JNKs); both p38 MAPK and JNK pathways control the transcription factors activator protein-1 (AP-1). Independently of MAP2Ks and p38 MAPKs, acts as a key activator of NF-kappa-B by promoting activation of the I-kappa-B-kinase (IKK) core complex. Mechanistically, recruited to polyubiquitin chains of RIPK2 and IKBKG/NEMO via TAB2/MAP3K7IP2 and TAB3/MAP3K7IP3, and catalyzes phosphorylation and activation of IKBKB/IKKB component of the IKK complex, leading to NF-kappa-B activation. In osmotic stress signaling, plays a major role in the activation of MAPK8/JNK1, but not that of NF-kappa-B. Promotes TRIM5 capsid-specific restriction activity. Phosphorylates RIPK1 at 'Ser-321' which positively regulates RIPK1 interaction with RIPK3 to promote necroptosis but negatively regulates RIPK1 kinase activity and its interaction with FADD to mediate apoptosis. Phosphorylates STING1 in response to cGAMP-activation, promoting association between STEEP1 and STING1 and STING1 translocation to COPII vesicles. The chain is Mitogen-activated protein kinase kinase kinase 7 (MAP3K7) from Bos taurus (Bovine).